The sequence spans 480 residues: MKHLVAAWLLVGLSLGVPQFGKGDICNPNPCENGGICLSGLADDSFSCECPEGFAGPNCSSVVEVASDEEKPTSAGPCIPNPCHNGGTCEISEAYRGDTFIGYVCKCPRGFNGIHCQHNINECEAEPCRNGGICTDLVANYSCECPGEFMGRNCQYKCSGPLGIEGGIISNQQITASSTHRALFGLQKWYPYYARLNKKGLINAWTAAENDRWPWIQINLQRKMRVTGVITQGAKRIGSPEYIKSYKIAYSNDGKTWAMYKVKGTNEEMVFRGNVDNNTPYANSFTPPIKAQYVRLYPQICRRHCTLRMELLGCELSGCSEPLGMKSGHIQDYQITASSVFRTLNMDMFTWEPRKARLDKQGKVNAWTSGHNDQSQWLQVDLLVPTKVTGIITQGAKDFGHVQFVGSYKLAYSNDGEHWMVHQDEKQRKDKVFQGNFDNDTHRKNVIDPPIYARFIRILPWSWYGRITLRSELLGCAEEE.

An N-terminal signal peptide occupies residues 1–23; the sequence is MKHLVAAWLLVGLSLGVPQFGKG. One can recognise an EGF-like 1 domain in the interval 24–60; the sequence is DICNPNPCENGGICLSGLADDSFSCECPEGFAGPNCS. Cystine bridges form between C26/C37, C31/C48, and C50/C59. O-linked (GalNAc...) threonine glycosylation is present at T73. 2 consecutive EGF-like domains span residues 74–117 and 119–155; these read SAGP…IHCQ and NINE…RNCQ. Intrachain disulfides connect C78/C89, C83/C105, and C107/C116. T88 carries an O-linked (Fuc...) threonine glycan. A Cell attachment site motif is present at residues 96–98; the sequence is RGD. N119, I120, and E122 together coordinate Ca(2+). 6 disulfide bridges follow: C123–C134, C128–C143, C145–C154, C158–C314, C301–C305, and C319–C476. Residues D136 and L137 each contribute to the Ca(2+) site. N-linked (GlcNAc...) asparagine glycosylation is present at N140. F5/8 type C domains are found at residues 158 to 314 and 319 to 476; these read CSGP…LLGC and CSEP…LLGC.

In terms of tissue distribution, expressed in angioblasts and early endothelial cells. By embryonic day 13.5, also expressed in a restricted group of non-endothelial cells including chondrocytes and retinal neurons.

It localises to the secreted. Its function is as follows. Promotes adhesion of endothelial cells through interaction with the alpha-v/beta-3 integrin receptor. Inhibits formation of vascular-like structures. May be involved in regulation of vascular morphogenesis of remodeling in embryonic development. This Mus musculus (Mouse) protein is EGF-like repeat and discoidin I-like domain-containing protein 3 (Edil3).